Here is a 450-residue protein sequence, read N- to C-terminus: Plasmepsin VII (450 aa).

The N-terminal stretch at 1-24 is a signal peptide; it reads MNKNIIQIYLFVFILLLKQHIVIL. Residues 92 to 441 enclose the Peptidase A1 domain; that stretch reads YYGEVQIGEQ…DKDNLKIGFV (350 aa). Catalysis depends on residues Asp-111 and Asp-324.

This sequence belongs to the peptidase A1 family.

It localises to the cytoplasm. In Plasmodium falciparum (isolate NF54), this protein is Plasmepsin VII.